Reading from the N-terminus, the 202-residue chain is Small ribosomal subunit protein uS4 (202 aa).

The 64-residue stretch at 91–154 (SMLSSVLYNS…VNLPSVLAAI (64 aa)) folds into the S4 RNA-binding domain.

It belongs to the universal ribosomal protein uS4 family. Part of the 30S ribosomal subunit. Contacts protein S5. The interaction surface between S4 and S5 is involved in control of translational fidelity.

In terms of biological role, one of the primary rRNA binding proteins, it binds directly to 16S rRNA where it nucleates assembly of the body of the 30S subunit. Its function is as follows. With S5 and S12 plays an important role in translational accuracy. The sequence is that of Small ribosomal subunit protein uS4 from Ehrlichia ruminantium (strain Gardel).